The primary structure comprises 336 residues: Homoserine O-acetyltransferase (336 aa).

The AB hydrolase-1 domain maps to 58–321 (AILVLHALTG…PHGHDAFLID (264 aa)). Serine 147 acts as the Nucleophile in catalysis. Arginine 204 contributes to the substrate binding site. Active-site residues include aspartate 286 and histidine 315. Aspartate 316 contributes to the substrate binding site.

It belongs to the AB hydrolase superfamily. MetX family. In terms of assembly, homodimer.

It is found in the cytoplasm. The enzyme catalyses L-homoserine + acetyl-CoA = O-acetyl-L-homoserine + CoA. It participates in amino-acid biosynthesis; L-methionine biosynthesis via de novo pathway; O-acetyl-L-homoserine from L-homoserine: step 1/1. Its function is as follows. Transfers an acetyl group from acetyl-CoA to L-homoserine, forming acetyl-L-homoserine. The sequence is that of Homoserine O-acetyltransferase from Deinococcus geothermalis (strain DSM 11300 / CIP 105573 / AG-3a).